The sequence spans 508 residues: Photosystem II CP47 reaction center protein (508 aa).

The next 6 membrane-spanning stretches (helical) occupy residues 21–36 (SVHI…WAGS), 101–115 (IVLS…IWHW), 140–156 (GIHL…FGAF), 203–218 (IAAG…FHLS), 237–252 (VLSS…AFVV), and 457–472 (SFAL…HGAR).

This sequence belongs to the PsbB/PsbC family. PsbB subfamily. In terms of assembly, PSII is composed of 1 copy each of membrane proteins PsbA, PsbB, PsbC, PsbD, PsbE, PsbF, PsbH, PsbI, PsbJ, PsbK, PsbL, PsbM, PsbT, PsbX, PsbY, PsbZ, Psb30/Ycf12, at least 3 peripheral proteins of the oxygen-evolving complex and a large number of cofactors. It forms dimeric complexes. Requires Binds multiple chlorophylls. PSII binds additional chlorophylls, carotenoids and specific lipids. as cofactor.

It is found in the plastid. The protein localises to the chloroplast thylakoid membrane. Its function is as follows. One of the components of the core complex of photosystem II (PSII). It binds chlorophyll and helps catalyze the primary light-induced photochemical processes of PSII. PSII is a light-driven water:plastoquinone oxidoreductase, using light energy to abstract electrons from H(2)O, generating O(2) and a proton gradient subsequently used for ATP formation. In Pelargonium hortorum (Common geranium), this protein is Photosystem II CP47 reaction center protein.